The following is a 388-amino-acid chain: Succinate--CoA ligase [ADP-forming] subunit beta (388 aa).

The ATP-grasp domain occupies 9 to 244 (KEIFARYGLP…PTQESELEVK (236 aa)). Residues lysine 46, 53 to 55 (GRG), glutamate 99, threonine 102, and glutamate 107 each bind ATP. 2 residues coordinate Mg(2+): asparagine 199 and aspartate 213. Substrate-binding positions include asparagine 264 and 321–323 (GIL).

This sequence belongs to the succinate/malate CoA ligase beta subunit family. In terms of assembly, heterotetramer of two alpha and two beta subunits. Mg(2+) serves as cofactor.

It catalyses the reaction succinate + ATP + CoA = succinyl-CoA + ADP + phosphate. It carries out the reaction GTP + succinate + CoA = succinyl-CoA + GDP + phosphate. Its pathway is carbohydrate metabolism; tricarboxylic acid cycle; succinate from succinyl-CoA (ligase route): step 1/1. Succinyl-CoA synthetase functions in the citric acid cycle (TCA), coupling the hydrolysis of succinyl-CoA to the synthesis of either ATP or GTP and thus represents the only step of substrate-level phosphorylation in the TCA. The beta subunit provides nucleotide specificity of the enzyme and binds the substrate succinate, while the binding sites for coenzyme A and phosphate are found in the alpha subunit. This chain is Succinate--CoA ligase [ADP-forming] subunit beta, found in Persephonella marina (strain DSM 14350 / EX-H1).